The sequence spans 152 residues: MEAVLNELVSVEDLLKFERKFKSEKAAGSVSKSTQFEYAWCLVRSKYNDDIRKGLALLEELLPKGSKEEQRDYVFYLAVGNYRLKEYEKALKYVRGLLQTEPQNNQAKELERLIDKAMKKDGLVGMAIVGGMALGVAGLAGLIGLAVSKSKS.

Met1 carries the post-translational modification N-acetylmethionine. The Cytoplasmic segment spans residues 1–122; it reads MEAVLNELVS…LIDKAMKKDG (122 aa). A Phosphoserine modification is found at Ser10. A TPR repeat occupies 71 to 104; sequence RDYVFYLAVGNYRLKEYEKALKYVRGLLQTEPQN. Residues 123–143 traverse the membrane as a helical segment; it reads LVGMAIVGGMALGVAGLAGLI. Residues 144–152 are Mitochondrial intermembrane-facing; sequence GLAVSKSKS.

Belongs to the FIS1 family. Interacts with DNM1L/DLP1 through the TPR region; may form part of a larger protein complex at the endoplasmic reticulum-mitochondrial interface during mitochondrial fission. Interacts with MARCHF5. Interacts with MIEF1. Interacts with PEX11A, PEX11B and PEX11G. Post-translationally, ubiquitinated by MARCHF5.

Its subcellular location is the mitochondrion outer membrane. It localises to the peroxisome membrane. In terms of biological role, involved in the fragmentation of the mitochondrial network and its perinuclear clustering. Plays a minor role in the recruitment and association of the fission mediator dynamin-related protein 1 (DNM1L) to the mitochondrial surface and mitochondrial fission. May not be essential for the assembly of functional fission complexes and the subsequent membrane scission event. Also mediates peroxisomal fission. May act when the products of fission are directed toward mitochondrial homeostasis, mitophagy, or apoptosis. Can induce cytochrome c release from the mitochondrion to the cytosol, ultimately leading to apoptosis. This is Mitochondrial fission 1 protein (FIS1) from Bos taurus (Bovine).